The chain runs to 397 residues: Acetate kinase 1 (397 aa).

Asn8 serves as a coordination point for Mg(2+). Lys15 is an ATP binding site. Arg89 contributes to the substrate binding site. Catalysis depends on Asp146, which acts as the Proton donor/acceptor. Residues 206-210 (HLGNG), 281-283 (DLR), and 329-333 (GIGEN) contribute to the ATP site. Position 382 (Glu382) interacts with Mg(2+).

This sequence belongs to the acetokinase family. Homodimer. Requires Mg(2+) as cofactor. It depends on Mn(2+) as a cofactor.

It is found in the cytoplasm. It carries out the reaction acetate + ATP = acetyl phosphate + ADP. It functions in the pathway metabolic intermediate biosynthesis; acetyl-CoA biosynthesis; acetyl-CoA from acetate: step 1/2. In terms of biological role, catalyzes the formation of acetyl phosphate from acetate and ATP. Can also catalyze the reverse reaction. The chain is Acetate kinase 1 from Listeria innocua serovar 6a (strain ATCC BAA-680 / CLIP 11262).